A 591-amino-acid polypeptide reads, in one-letter code: MKKISLPKIGIRPVIDGRRMGVRESLEEQTMNMAKATAALLTEKLRHACGAAVECVISDTCIAGMAEAAACEEKFSSQNVGLTITVTPCWCYGSETIDMDPTRPKAIWGFNGTERPGAVYLAAALAAHSQKGIPAFSIYGHDVQDADDTSIPADVEEKLLRFARAGLAVASMKGKSYLSLGGVSMGIAGSIVDHNFFESWLGMKVQAVDMTELRRRIDQQIYDEAELEMALAWADKNFRYGEDENNKQYQRNAEQSRAVLRESLLMAMCIRDMMQGNSKLADIGRVEESLGYNAIAAGFQGQRHWTDQYPNGDTAEAILNSSFDWNGVREPFVVATENDSLNGVAMLMGHQLTGTAQVFADVRTYWSPEAIERVTGHKLDGLAEHGIIHLINSGSAALDGSCKQRDSEGNPTMKPHWEISQQEADACLAATEWCPAIHEYFRGGGYSSRFLTEGGVPFTMTRVNIIKGLGPVLQIAEGWSVELPKDVHDILNKRTNSTWPTTWFAPRLTGKGPFTDVYSVMANWGANHGVLTIGHVGADFITLASMLRIPVCMHNVEETKVYRPSAWAAHGMDIEGQDYRACQNYGPLYKR.

Residues E337 and D361 each act as proton acceptor in the active site. Positions 337, 361, and 528 each coordinate Mn(2+).

This sequence belongs to the L-fucose isomerase family. As to quaternary structure, homohexamer. It depends on Mn(2+) as a cofactor.

Its subcellular location is the cytoplasm. The enzyme catalyses L-fucose = L-fuculose. It functions in the pathway carbohydrate degradation; L-fucose degradation; L-lactaldehyde and glycerone phosphate from L-fucose: step 1/3. Functionally, converts the aldose L-fucose into the corresponding ketose L-fuculose. This chain is L-fucose isomerase, found in Escherichia coli (strain ATCC 8739 / DSM 1576 / NBRC 3972 / NCIMB 8545 / WDCM 00012 / Crooks).